The following is a 389-amino-acid chain: Probable tRNA pseudouridine synthase D 1 (389 aa).

Aspartate 63 (nucleophile) is an active-site residue. The 211-residue stretch at 135-345 (GAPNYYDDQR…KYTKRPIISI (211 aa)) folds into the TRUD domain.

Belongs to the pseudouridine synthase TruD family.

The enzyme catalyses uridine(13) in tRNA = pseudouridine(13) in tRNA. Its function is as follows. Could be responsible for synthesis of pseudouridine from uracil-13 in transfer RNAs. The sequence is that of Probable tRNA pseudouridine synthase D 1 (truD1) from Methanococcus maripaludis (strain DSM 14266 / JCM 13030 / NBRC 101832 / S2 / LL).